The sequence spans 316 residues: GMP reductase (316 aa).

Cys-175 functions as the Thioimidate intermediate in the catalytic mechanism. 202 to 225 contacts NADP(+); sequence VIADGGIVEHGDIAKALVCGATMV.

The protein belongs to the IMPDH/GMPR family. GuaC type 2 subfamily.

It catalyses the reaction IMP + NH4(+) + NADP(+) = GMP + NADPH + 2 H(+). Functionally, catalyzes the irreversible NADPH-dependent deamination of GMP to IMP. It functions in the conversion of nucleobase, nucleoside and nucleotide derivatives of G to A nucleotides, and in maintaining the intracellular balance of A and G nucleotides. This Chromobacterium violaceum (strain ATCC 12472 / DSM 30191 / JCM 1249 / CCUG 213 / NBRC 12614 / NCIMB 9131 / NCTC 9757 / MK) protein is GMP reductase.